Here is a 409-residue protein sequence, read N- to C-terminus: Major capsid protein (409 aa).

This sequence belongs to the lambda phage major capsid protein family. Homomultimer. Interacts with the portal protein. Interacts with the decoration protein.

Its subcellular location is the virion. It is found in the host cytoplasm. Its function is as follows. Assembles to form an icosahedric capsid shell with a T=7 symmetry although with a diameter of about 82 nm, which is a larger volume than the usual T=7 capsids. A dramatic reconfiguration of the capsid shell that expands the procaspid from a diameter of 66 nm to a supersized capsid of 82 nm, allows packaging of the large viral DNA genome. The capsid decoration protein binds the expanded capsid and stabilizes it. The protein is Major capsid protein of Thermus virus P23-45 (Thermus thermophilus phage P23-45).